A 643-amino-acid polypeptide reads, in one-letter code: Long-chain fatty acid transport protein 4 (643 aa).

A run of 2 helical transmembrane segments spans residues L20–I42 and F139–I156. Y243–K254 is an AMP binding site.

The protein belongs to the ATP-dependent AMP-binding enzyme family.

The protein localises to the endoplasmic reticulum membrane. It carries out the reaction a fatty acid(in) = a fatty acid(out). It catalyses the reaction (9Z,12Z)-octadecadienoate(out) = (9Z,12Z)-octadecadienoate(in). The enzyme catalyses (9Z)-octadecenoate(out) = (9Z)-octadecenoate(in). The catalysed reaction is hexadecanoate(out) = hexadecanoate(in). It carries out the reaction a long-chain fatty acid + ATP + CoA = a long-chain fatty acyl-CoA + AMP + diphosphate. It catalyses the reaction (5Z,8Z,11Z,14Z)-eicosatetraenoate + ATP + CoA = (5Z,8Z,11Z,14Z)-eicosatetraenoyl-CoA + AMP + diphosphate. The enzyme catalyses (9Z)-octadecenoate + ATP + CoA = (9Z)-octadecenoyl-CoA + AMP + diphosphate. The catalysed reaction is hexadecanoate + ATP + CoA = hexadecanoyl-CoA + AMP + diphosphate. It carries out the reaction (E)-hexadec-2-enoate + ATP + CoA = (2E)-hexadecenoyl-CoA + AMP + diphosphate. It catalyses the reaction a very long-chain fatty acid + ATP + CoA = a very long-chain fatty acyl-CoA + AMP + diphosphate. The enzyme catalyses tetracosanoate + ATP + CoA = tetracosanoyl-CoA + AMP + diphosphate. In terms of biological role, mediates the import of long-chain fatty acids (LCFA) into the cell by facilitating their transport across cell membranes. Appears to be the principal fatty acid transporter in small intestinal enterocytes. Also functions as an acyl-CoA ligase catalyzing the ATP-dependent formation of fatty acyl-CoA using LCFA and very-long-chain fatty acids (VLCFA) as substrates, which prevents fatty acid efflux from cells and might drive more fatty acid uptake. Plays a role in the formation of the epidermal barrier. Required for fat absorption in early embryogenesis. Probably involved in fatty acid transport across the blood barrier. Indirectly inhibits RPE65 via substrate competition and via production of VLCFA derivatives like lignoceroyl-CoA. Prevents light-induced degeneration of rods and cones. The sequence is that of Long-chain fatty acid transport protein 4 (SLC27A4) from Pongo abelii (Sumatran orangutan).